Consider the following 261-residue polypeptide: Arcelin-5B (261 aa).

A signal peptide spans 1–21; it reads MASSKLLSLALFLVLLTHANS. N-linked (GlcNAc...) asparagine glycosylation is found at Asn91 and Asn100. Cys167 and Cys203 form a disulfide bridge.

The protein belongs to the leguminous lectin family. As to quaternary structure, monomer.

Seed storage. This carbohydrate-binding lectin has toxic effects on bean bruchid pests. The polypeptide is Arcelin-5B (ARC5B) (Phaseolus vulgaris (Kidney bean)).